The chain runs to 194 residues: Protein GrpE 1 (194 aa).

Positions 1-22 (MIHNEEEQLEKKIEKNQDPKIN) are disordered.

This sequence belongs to the GrpE family. Homodimer.

The protein resides in the cytoplasm. Participates actively in the response to hyperosmotic and heat shock by preventing the aggregation of stress-denatured proteins, in association with DnaK and GrpE. It is the nucleotide exchange factor for DnaK and may function as a thermosensor. Unfolded proteins bind initially to DnaJ; upon interaction with the DnaJ-bound protein, DnaK hydrolyzes its bound ATP, resulting in the formation of a stable complex. GrpE releases ADP from DnaK; ATP binding to DnaK triggers the release of the substrate protein, thus completing the reaction cycle. Several rounds of ATP-dependent interactions between DnaJ, DnaK and GrpE are required for fully efficient folding. This is Protein GrpE 1 from Buchnera aphidicola subsp. Acyrthosiphon pisum (strain APS) (Acyrthosiphon pisum symbiotic bacterium).